The chain runs to 180 residues: ATP synthase subunit delta (180 aa).

Belongs to the ATPase delta chain family. F-type ATPases have 2 components, F(1) - the catalytic core - and F(0) - the membrane proton channel. F(1) has five subunits: alpha(3), beta(3), gamma(1), delta(1), epsilon(1). F(0) has three main subunits: a(1), b(2) and c(10-14). The alpha and beta chains form an alternating ring which encloses part of the gamma chain. F(1) is attached to F(0) by a central stalk formed by the gamma and epsilon chains, while a peripheral stalk is formed by the delta and b chains.

It localises to the cell membrane. Functionally, f(1)F(0) ATP synthase produces ATP from ADP in the presence of a proton or sodium gradient. F-type ATPases consist of two structural domains, F(1) containing the extramembraneous catalytic core and F(0) containing the membrane proton channel, linked together by a central stalk and a peripheral stalk. During catalysis, ATP synthesis in the catalytic domain of F(1) is coupled via a rotary mechanism of the central stalk subunits to proton translocation. Its function is as follows. This protein is part of the stalk that links CF(0) to CF(1). It either transmits conformational changes from CF(0) to CF(1) or is implicated in proton conduction. This Enterococcus hirae (strain ATCC 9790 / DSM 20160 / JCM 8729 / LMG 6399 / NBRC 3181 / NCIMB 6459 / NCDO 1258 / NCTC 12367 / WDCM 00089 / R) protein is ATP synthase subunit delta.